Here is a 357-residue protein sequence, read N- to C-terminus: Alpha-2-macroglobulin receptor-associated protein (357 aa).

The signal sequence occupies residues 1 to 34 (MAPRRVRSFLRGLPALLLLLLFLGPWPAASHGGK). Positions 32-52 (GGKYSREKNQPKPSPKRESGE) are disordered. The span at 35–52 (YSREKNQPKPSPKRESGE) shows a compositional bias: basic and acidic residues. Phosphoserine occurs at positions 50 and 135. Residues 219-310 (SRHTELKEKL…AHEKLRHAES (92 aa)) adopt a coiled-coil conformation. Residues 237 to 353 (RLRRVSHQGY…DLSGRISRAR (117 aa)) are LDL receptor binding. Position 248 is a phosphothreonine (Thr248). Asn268 is a glycosylation site (N-linked (GlcNAc...) asparagine). The Prevents secretion from ER signature appears at 354 to 357 (HNEL).

The protein belongs to the alpha-2-MRAP family. Interacts with the LRP1/alpha-2-macroglobulin receptor heavy and light chains; the interaction is transient and coincides with a reduction of ligand binding by the receptor. Interacts with LRP2/glycoprotein 330. Interacts with LRP1B; binding is followed by internalization and degradation. Interacts with LDLR. Interacts with SORL1. Interacts with LRP1; this interaction is followed by rapid internalization. Post-translationally, N-glycosylated.

The protein localises to the rough endoplasmic reticulum lumen. The protein resides in the endoplasmic reticulum-Golgi intermediate compartment lumen. Its subcellular location is the golgi apparatus. It localises to the cis-Golgi network. It is found in the golgi apparatus lumen. The protein localises to the endosome lumen. The protein resides in the cell surface. In terms of biological role, molecular chaperone for LDL receptor-related proteins that may regulate their ligand binding activity along the secretory pathway. The chain is Alpha-2-macroglobulin receptor-associated protein from Homo sapiens (Human).